Here is a 364-residue protein sequence, read N- to C-terminus: UDP-N-acetylglucosamine--N-acetylmuramyl-(pentapeptide) pyrophosphoryl-undecaprenol N-acetylglucosamine transferase (364 aa).

UDP-N-acetyl-alpha-D-glucosamine contacts are provided by residues 10–12 (TGG), Asn-124, Arg-166, Ser-196, and Gln-297.

It belongs to the glycosyltransferase 28 family. MurG subfamily.

The protein resides in the cell membrane. It carries out the reaction di-trans,octa-cis-undecaprenyl diphospho-N-acetyl-alpha-D-muramoyl-L-alanyl-D-glutamyl-meso-2,6-diaminopimeloyl-D-alanyl-D-alanine + UDP-N-acetyl-alpha-D-glucosamine = di-trans,octa-cis-undecaprenyl diphospho-[N-acetyl-alpha-D-glucosaminyl-(1-&gt;4)]-N-acetyl-alpha-D-muramoyl-L-alanyl-D-glutamyl-meso-2,6-diaminopimeloyl-D-alanyl-D-alanine + UDP + H(+). It participates in cell wall biogenesis; peptidoglycan biosynthesis. Its function is as follows. Cell wall formation. Catalyzes the transfer of a GlcNAc subunit on undecaprenyl-pyrophosphoryl-MurNAc-pentapeptide (lipid intermediate I) to form undecaprenyl-pyrophosphoryl-MurNAc-(pentapeptide)GlcNAc (lipid intermediate II). This Caldanaerobacter subterraneus subsp. tengcongensis (strain DSM 15242 / JCM 11007 / NBRC 100824 / MB4) (Thermoanaerobacter tengcongensis) protein is UDP-N-acetylglucosamine--N-acetylmuramyl-(pentapeptide) pyrophosphoryl-undecaprenol N-acetylglucosamine transferase.